Reading from the N-terminus, the 343-residue chain is Dihydroorotase (343 aa).

2 residues coordinate Zn(2+): His-13 and His-15. Residues 15-17 (HLR) and Asn-41 contribute to the substrate site. Zn(2+)-binding residues include Lys-99, His-136, and His-174. Lys-99 is subject to N6-carboxylysine. His-136 contacts substrate. Leu-219 is a binding site for substrate. Asp-247 provides a ligand contact to Zn(2+). Asp-247 is an active-site residue. Substrate is bound by residues His-251 and Ala-263.

The protein belongs to the metallo-dependent hydrolases superfamily. DHOase family. Class II DHOase subfamily. In terms of assembly, homodimer. Zn(2+) is required as a cofactor.

The catalysed reaction is (S)-dihydroorotate + H2O = N-carbamoyl-L-aspartate + H(+). It participates in pyrimidine metabolism; UMP biosynthesis via de novo pathway; (S)-dihydroorotate from bicarbonate: step 3/3. Catalyzes the reversible cyclization of carbamoyl aspartate to dihydroorotate. The protein is Dihydroorotase of Alkalilimnicola ehrlichii (strain ATCC BAA-1101 / DSM 17681 / MLHE-1).